A 443-amino-acid chain; its full sequence is ATP-dependent protease ATPase subunit HslU (443 aa).

ATP is bound by residues Ile-18, Gly-60–Glu-65, Asp-256, Glu-321, and Arg-393.

Belongs to the ClpX chaperone family. HslU subfamily. A double ring-shaped homohexamer of HslV is capped on each side by a ring-shaped HslU homohexamer. The assembly of the HslU/HslV complex is dependent on binding of ATP.

It is found in the cytoplasm. ATPase subunit of a proteasome-like degradation complex; this subunit has chaperone activity. The binding of ATP and its subsequent hydrolysis by HslU are essential for unfolding of protein substrates subsequently hydrolyzed by HslV. HslU recognizes the N-terminal part of its protein substrates and unfolds these before they are guided to HslV for hydrolysis. The protein is ATP-dependent protease ATPase subunit HslU of Pectobacterium atrosepticum (strain SCRI 1043 / ATCC BAA-672) (Erwinia carotovora subsp. atroseptica).